A 300-amino-acid polypeptide reads, in one-letter code: 4-diphosphocytidyl-2-C-methyl-D-erythritol kinase (300 aa).

Lysine 17 is an active-site residue. ATP is bound at residue proline 102–alanine 112. Aspartate 144 is a catalytic residue.

This sequence belongs to the GHMP kinase family. IspE subfamily.

It catalyses the reaction 4-CDP-2-C-methyl-D-erythritol + ATP = 4-CDP-2-C-methyl-D-erythritol 2-phosphate + ADP + H(+). It functions in the pathway isoprenoid biosynthesis; isopentenyl diphosphate biosynthesis via DXP pathway; isopentenyl diphosphate from 1-deoxy-D-xylulose 5-phosphate: step 3/6. Its function is as follows. Catalyzes the phosphorylation of the position 2 hydroxy group of 4-diphosphocytidyl-2C-methyl-D-erythritol. This Bradyrhizobium sp. (strain ORS 278) protein is 4-diphosphocytidyl-2-C-methyl-D-erythritol kinase.